The following is a 452-amino-acid chain: 1-aminocyclopropane-1-carboxylate synthase 3 (452 aa).

Lys-283 is subject to N6-(pyridoxal phosphate)lysine.

The protein belongs to the class-I pyridoxal-phosphate-dependent aminotransferase family. Pyridoxal 5'-phosphate serves as cofactor. As to expression, expressed in leaves. Expressed in roots and leaf blades. Expressed at low levels in leaf sheaths and shoot bases.

It catalyses the reaction S-adenosyl-L-methionine = 1-aminocyclopropane-1-carboxylate + S-methyl-5'-thioadenosine + H(+). Its pathway is alkene biosynthesis; ethylene biosynthesis via S-adenosyl-L-methionine; ethylene from S-adenosyl-L-methionine: step 1/2. Its function is as follows. Catalyzes the formation of 1-aminocyclopropane-1-carboxylate, a direct precursor of ethylene in higher plants. This is 1-aminocyclopropane-1-carboxylate synthase 3 from Oryza sativa subsp. japonica (Rice).